Reading from the N-terminus, the 1151-residue chain is uncharacterized protein (1151 aa).

5 disordered regions span residues Phe611–Glu633, Asn709–Val740, Pro753–Leu778, Pro795–Leu880, and Leu1060–Glu1151. Composition is skewed to pro residues over residues Pro754 to Pro773 and Ile811 to Pro842. The span at Pro867–Pro878 shows a compositional bias: low complexity. The span at Glu1082–Asp1091 shows a compositional bias: acidic residues. Over residues Pro1131 to Thr1142 the composition is skewed to polar residues.

This is an uncharacterized protein from Ostreid herpesvirus 1 (isolate France) (OsHV-1).